Reading from the N-terminus, the 539-residue chain is MPSPTGVFVLMILTHLSFGLGQVRNEDQLLMVGQNGDLDSSNPAIHHQQHQQHQQHQQHQQHQSNHNLNNGNMNSTILNTLMGNNAGQVVNSSPGGGGSMINQLGSSTSSVPSVIGGGVGSVGNPWHSAVGLGVPGNGMGLPSSHGLGGNMGSHPHGHALAGLAKLGIIVPGGQGLPGNLGYGGTMLNGGGVGGAAGMGLGIGSNTNNMDMQQGLYNEHFISEHTVMAVFTSQGQVGGPCRYMPATRRQNHQCRKETGLPGTLSEARRLATTHCEEQFRYDRWNCSIETRGKRNIFKKLYKETAFVHALTAAAMTHSIARACAEGRMTKCSCGPKKHNREAQDFQWGGCNDNLKHGKRVTRSFLDLRGGDGDEVSEILRHDSEVGIEAVSSQMMDKCKCHGVSGSCSMKTCWKKMADFNATATLLRQKYNEAIRKAPNQRSMRQVSSSRMKKPKQRRKKPQQSQYTTLYYLETSPSYCAVTKDRQCLHPDNCGTLCCGRGYTTQVVKQVEKCRCRFNNGRCCQLICDYCQRLENKYFCK.

Residues 1–21 (MPSPTGVFVLMILTHLSFGLG) form the signal peptide. Residues 34–77 (QNGDLDSSNPAIHHQQHQQHQQHQQHQQHQSNHNLNNGNMNSTI) are disordered. A compositionally biased stretch (low complexity) spans 51–74 (QQHQQHQQHQQHQSNHNLNNGNMN). N-linked (GlcNAc...) asparagine glycosylation is found at Asn74 and Asn284. 5 disulfide bridges follow: Cys274–Cys285, Cys322–Cys330, Cys332–Cys349, Cys397–Cys411, and Cys399–Cys406. The O-palmitoleoyl serine; by PORCN moiety is linked to residue Ser403. N-linked (GlcNAc...) asparagine glycosylation is present at Asn419. Residues 436–463 (APNQRSMRQVSSSRMKKPKQRRKKPQQS) are disordered. Positions 439-448 (QRSMRQVSSS) are enriched in low complexity. Basic residues predominate over residues 449–460 (RMKKPKQRRKKP). Intrachain disulfides connect Cys478–Cys497, Cys486–Cys492, Cys496–Cys538, Cys512–Cys529, Cys514–Cys526, and Cys521–Cys522.

It belongs to the Wnt family. Palmitoleoylated by porcupine. The lipid group functions as a sorting signal, targeting the ligand to polarized vesicles that transport Wnt4 to unique sites at the cell surface. Depalmitoleoylated by notum, leading to inhibit Wnt signaling pathway.

The protein resides in the secreted. It is found in the extracellular space. It localises to the extracellular matrix. In terms of biological role, binds as a ligand to a family of frizzled seven-transmembrane receptors and acts through a cascade of genes on the nucleus. Acts downstream of homeotic complex genes in the visceral mesoderm and is required for embryonic segmentation. Also required for cell movement and FAK regulation during ovarian morphogenesis. This is Protein Wnt-4 (Wnt4) from Drosophila melanogaster (Fruit fly).